Consider the following 500-residue polypeptide: MNTFFSRLITVVACFFIFSAAWFCLWSISLHLVERPELAALLFPFGLRLGLMLQCPRGYWPVLLGAEWLLVYWLAQEVALAHLPLLMIGSVLTLLPVALTSRYRHQRDWRTLLLQGAALTAAALLQSLPWLGQGEEAWNALLLTLTGGLTLAPICLVFWHYLTSTTWLPLGPSLVSQPVNWRGRHLIWYLLLFIVSLWLQLGLPAELSRFTPFCLALPIIALAWHYGWQGALIATLMNAIALIASQTWHDHPVDLLLSLLAQSLTGLLLGAGIQRLRELNQSLQKELARNHRLAERLLETEESVRRDVARELHDDIGQTITAIRTQAGIVQRLAADNGGVKQSGQLIEQLSLGVYDAVRRLLGRLRPRQLDDLTLAQAIRSLLREMELESRGIVSHLDWRIDETALSESQRVTLFRVCQEGLNNIVKHANASAVTLQGWQQDERLMLVIEDDGSGLPPGSHQQGFGLTGMRERVSALGGTLTISCTHGTRVSVSLPQRYV.

8 consecutive transmembrane segments (helical) span residues 8 to 28 (LITV…LWSI), 78 to 98 (VALA…LPVA), 112 to 132 (LLLQ…PWLG), 140 to 160 (ALLL…VFWH), 185 to 205 (HLIW…GLPA), 207 to 224 (LSRF…ALAW), 231 to 249 (ALIA…QTWH), and 253 to 273 (VDLL…GAGI). The Cytoplasmic segment spans residues 274-500 (QRLRELNQSL…VSVSLPQRYV (227 aa)). Positions 311–499 (ELHDDIGQTI…RVSVSLPQRY (189 aa)) constitute a Histidine kinase domain. The residue at position 313 (H313) is a Phosphohistidine; by autocatalysis.

Post-translationally, autophosphorylated.

It is found in the cell inner membrane. It carries out the reaction ATP + protein L-histidine = ADP + protein N-phospho-L-histidine.. Functionally, part of the UhpABC signaling cascade that controls the expression of the hexose phosphate transporter UhpT. UhpB functions as a membrane-associated protein kinase that autophosphorylates in response to interaction with UhpC, and subsequently transfers its phosphate group to the response regulator UhpA. Can also dephosphorylate UhpA. This is Signal transduction histidine-protein kinase/phosphatase UhpB (uhpB) from Salmonella typhimurium (strain LT2 / SGSC1412 / ATCC 700720).